Reading from the N-terminus, the 380-residue chain is DNA-directed RNA polymerase subunit Rpo1C (380 aa).

The protein belongs to the RNA polymerase beta' chain family. In terms of assembly, part of the RNA polymerase complex.

The protein localises to the cytoplasm. The enzyme catalyses RNA(n) + a ribonucleoside 5'-triphosphate = RNA(n+1) + diphosphate. DNA-dependent RNA polymerase (RNAP) catalyzes the transcription of DNA into RNA using the four ribonucleoside triphosphates as substrates. Forms part of the jaw domain. The sequence is that of DNA-directed RNA polymerase subunit Rpo1C from Archaeoglobus fulgidus (strain ATCC 49558 / DSM 4304 / JCM 9628 / NBRC 100126 / VC-16).